The sequence spans 223 residues: Ribose-5-phosphate isomerase A (223 aa).

Substrate is bound by residues 32 to 35 (TGST), 85 to 88 (DGAD), and 98 to 101 (KGGG). E107 (proton acceptor) is an active-site residue. Substrate is bound at residue K125.

It belongs to the ribose 5-phosphate isomerase family. As to quaternary structure, homodimer.

It carries out the reaction aldehydo-D-ribose 5-phosphate = D-ribulose 5-phosphate. It participates in carbohydrate degradation; pentose phosphate pathway; D-ribose 5-phosphate from D-ribulose 5-phosphate (non-oxidative stage): step 1/1. In terms of biological role, catalyzes the reversible conversion of ribose-5-phosphate to ribulose 5-phosphate. The protein is Ribose-5-phosphate isomerase A of Pseudomonas syringae pv. syringae (strain B728a).